Consider the following 189-residue polypeptide: Probable chorismate pyruvate-lyase (189 aa).

Positions 74, 113, and 175 each coordinate substrate.

It belongs to the UbiC family.

It localises to the cytoplasm. The catalysed reaction is chorismate = 4-hydroxybenzoate + pyruvate. It participates in cofactor biosynthesis; ubiquinone biosynthesis. Functionally, removes the pyruvyl group from chorismate, with concomitant aromatization of the ring, to provide 4-hydroxybenzoate (4HB) for the ubiquinone pathway. This is Probable chorismate pyruvate-lyase from Azoarcus sp. (strain BH72).